The sequence spans 556 residues: Thermosome subunit beta (556 aa).

The segment at 530-556 (LSTDKGDDDGGAGGMGGGMGGGMGGMM) is disordered. Residues 540–556 (GAGGMGGGMGGGMGGMM) show a composition bias toward gly residues.

It belongs to the TCP-1 chaperonin family. Forms an oligomeric complex of eight-membered rings.

Molecular chaperone; binds unfolded polypeptides in vitro, and has a weak ATPase activity. This is Thermosome subunit beta (thsB) from Halobacterium salinarum (strain ATCC 700922 / JCM 11081 / NRC-1) (Halobacterium halobium).